Consider the following 268-residue polypeptide: Octanoyltransferase (268 aa).

Positions 49 to 237 constitute a BPL/LPL catalytic domain; sequence GTQGDVILVV…ALLKALSGEL (189 aa). Residues 87–94, 167–169, and 180–182 each bind substrate; these read RGGRITWH, ALG, and GLA. Catalysis depends on Cys198, which acts as the Acyl-thioester intermediate.

Belongs to the LipB family.

It localises to the cytoplasm. The enzyme catalyses octanoyl-[ACP] + L-lysyl-[protein] = N(6)-octanoyl-L-lysyl-[protein] + holo-[ACP] + H(+). It participates in protein modification; protein lipoylation via endogenous pathway; protein N(6)-(lipoyl)lysine from octanoyl-[acyl-carrier-protein]: step 1/2. Catalyzes the transfer of endogenously produced octanoic acid from octanoyl-acyl-carrier-protein onto the lipoyl domains of lipoate-dependent enzymes. Lipoyl-ACP can also act as a substrate although octanoyl-ACP is likely to be the physiological substrate. This chain is Octanoyltransferase, found in Corynebacterium aurimucosum (strain ATCC 700975 / DSM 44827 / CIP 107346 / CN-1) (Corynebacterium nigricans).